Reading from the N-terminus, the 378-residue chain is Beta-1,3-N-acetylglucosaminyltransferase lunatic fringe (378 aa).

At 1–8 (MLQRCGRR) the chain is on the cytoplasmic side. A helical; Signal-anchor for type II membrane protein membrane pass occupies residues 9 to 29 (LLLALVGALLACLLVLTADPP). The Lumenal segment spans residues 30 to 378 (PTPMPAERGR…TPWCPRSAIF (349 aa)). The interval 85-108 (RDADPPPGVASRQGDGHPRPPAEV) is disordered. Residue Arg-128 coordinates substrate. N-linked (GlcNAc...) asparagine glycosylation occurs at Asn-166. 2 disulfides stabilise this stretch: Cys-167–Cys-178 and Cys-196–Cys-259. Residue Asp-200 coordinates substrate. Residue Asp-201 coordinates Mn(2+). Asp-289 is an active-site residue. His-313 lines the Mn(2+) pocket. A disulfide bridge links Cys-363 with Cys-372.

This sequence belongs to the glycosyltransferase 31 family. Mn(2+) serves as cofactor. Co(2+) is required as a cofactor. A soluble form may be derived from the membrane form by proteolytic processing. As to expression, detected at 12.5 dpc in all tissues examined with the highest level observed in adult brain and spleen. Detected in the dental epithelium.

The protein localises to the golgi apparatus. Its subcellular location is the golgi apparatus membrane. It catalyses the reaction 3-O-(alpha-L-fucosyl)-L-threonyl-[EGF-like domain protein] + UDP-N-acetyl-alpha-D-glucosamine = 3-O-(N-acetyl-beta-D-glucosaminyl-(1-&gt;3)-alpha-L-fucosyl)-L-threonyl-[EGF-like domain protein] + UDP + H(+). The enzyme catalyses 3-O-(alpha-L-fucosyl)-L-seryl-[EGF-like domain protein] + UDP-N-acetyl-alpha-D-glucosamine = 3-O-(N-acetyl-beta-D-glucosaminyl-(1-&gt;3)-alpha-L-fucosyl)-L-seryl-[EGF-like domain protein] + UDP + H(+). Its function is as follows. Glycosyltransferase that initiates the elongation of O-linked fucose residues attached to EGF-like repeats in the extracellular domain of Notch molecules. Modulates NOTCH1 activity by modifying O-fucose residues at specific EGF-like domains resulting in inhibition of NOTCH1 activation by JAG1 and enhancement of NOTCH1 activation by DLL1 via an increase in its binding to DLL1. Decreases the binding of JAG1 to NOTCH2 but not that of DLL1. Essential mediator of somite segmentation and patterning. During somite boundary formation, it restricts Notch activity in the presomitic mesoderm to a boundary-forming territory in the posterior half of the prospective somite. In this region, Notch function activates a set of genes that are involved in boundary formation and in anterior-posterior somite identity. Ectopically expressed in the thymus, Lfgn inhibits Notch signaling which results in inhibition of T-cell commitment and promotes B-cell development in lymphoid progenitors. May play a role in boundary formation of the enamel knot. The chain is Beta-1,3-N-acetylglucosaminyltransferase lunatic fringe from Mus musculus (Mouse).